Reading from the N-terminus, the 201-residue chain is MAWMLLLILIMVYPGSCALWVSQPPEIRTLEGSSAFLPCSFNASQGRLAIGSVTWFRDEVAPGKEVRNGTPEFRGRLAPLSSSRFLRDHQAELHIWDVRGHDAGIYVCRVEVLGLGVGTGNGTRLVVEKEYPQLGAGTVLLLRAGFYAVSFLSVAMGSTLYYQGKCLTWKGPRRQLPAVVPGPLPPPCGSSAHLLPPVPGG.

The N-terminal stretch at 1-18 (MAWMLLLILIMVYPGSCA) is a signal peptide. Residues 19–126 (LWVSQPPEIR…VGTGNGTRLV (108 aa)) form the Ig-like domain. Residues 19–133 (LWVSQPPEIR…RLVVEKEYPQ (115 aa)) lie on the Extracellular side of the membrane. Cys39 and Cys108 form a disulfide bridge. N-linked (GlcNAc...) asparagine glycans are attached at residues Asn42 and Asn121. Residues 134-154 (LGAGTVLLLRAGFYAVSFLSV) form a helical membrane-spanning segment. The Cytoplasmic segment spans residues 155-201 (AMGSTLYYQGKCLTWKGPRRQLPAVVPGPLPPPCGSSAHLLPPVPGG).

The protein belongs to the natural cytotoxicity receptor (NCR) family. As to quaternary structure, homodimer in the unliganted form. Interacts with CD3Z. Interacts with and is activated by binding to NCR3LG1. Interacts with and is activated by binding to BAG6. Interacts with and is inhibited by binding to LGALS3.

Its subcellular location is the cell membrane. In terms of biological role, cell membrane receptor of natural killer/NK cells that is activated by binding of extracellular ligands including BAG6 and NCR3LG1. Stimulates NK cells cytotoxicity toward neighboring cells producing these ligands. It controls, for instance, NK cells cytotoxicity against tumor cells. Engagement of NCR3 by BAG6 also promotes myeloid dendritic cells (DC) maturation, both through killing DCs that did not acquire a mature phenotype, and inducing the release by NK cells of TNFA and IFNG that promote DC maturation. The polypeptide is Natural cytotoxicity triggering receptor 3 (NCR3) (Macaca mulatta (Rhesus macaque)).